The sequence spans 494 residues: Inosine-5'-monophosphate dehydrogenase (494 aa).

CBS domains lie at 93 to 154 and 158 to 217; these read IIRN…DEKI and MTTN…CKDS. NAD(+) contacts are provided by residues Asp251 and 301 to 303; that span reads GIG. K(+)-binding residues include Gly303 and Gly305. IMP is bound at residue Ser306. Cys308 contacts K(+). Cys308 serves as the catalytic Thioimidate intermediate. Residues 341-343, 364-365, and 388-392 each bind IMP; these read DGG, GS, and YRGMG. Catalysis depends on Arg406, which acts as the Proton acceptor. Glu421 serves as a coordination point for IMP. Residues Glu475, Ser476, and His477 each contribute to the K(+) site.

It belongs to the IMPDH/GMPR family. As to quaternary structure, homotetramer. K(+) is required as a cofactor.

It carries out the reaction IMP + NAD(+) + H2O = XMP + NADH + H(+). The protein operates within purine metabolism; XMP biosynthesis via de novo pathway; XMP from IMP: step 1/1. With respect to regulation, mycophenolic acid (MPA) is a non-competitive inhibitor that prevents formation of the closed enzyme conformation by binding to the same site as the amobile flap. In contrast, mizoribine monophosphate (MZP) is a competitive inhibitor that induces the closed conformation. MPA is a potent inhibitor of mammalian IMPDHs but a poor inhibitor of the bacterial enzymes. MZP is a more potent inhibitor of bacterial IMPDH. Its function is as follows. Catalyzes the conversion of inosine 5'-phosphate (IMP) to xanthosine 5'-phosphate (XMP), the first committed and rate-limiting step in the de novo synthesis of guanine nucleotides, and therefore plays an important role in the regulation of cell growth. The sequence is that of Inosine-5'-monophosphate dehydrogenase from Chlorobaculum tepidum (strain ATCC 49652 / DSM 12025 / NBRC 103806 / TLS) (Chlorobium tepidum).